The chain runs to 1334 residues: Lysine-specific demethylase 3A-B (1334 aa).

3 disordered regions span residues 243-288, 352-382, and 514-533; these read DQND…KTSF, PGIQ…SQNL, and KPQE…VTYP. Residues 267–283 show a composition bias toward basic and acidic residues; it reads TEVKQTRNEEVPSKDVT. The segment at 684-709 adopts a C6-type zinc-finger fold; that stretch reads CDACDTTIFNLHWVCPKCGFGVCVDC. Positions 897–901 match the LXXLL motif motif; it reads LRNLL. Positions 1089–1294 constitute a JmjC domain; that stretch reads RREGKLNLAA…HCFCLTQEFR (206 aa). Fe cation-binding residues include His-1133, Asp-1135, and His-1262.

It belongs to the JHDM2 histone demethylase family. Requires Fe(2+) as cofactor.

It localises to the cytoplasm. It is found in the nucleus. The catalysed reaction is N(6),N(6)-dimethyl-L-lysyl(9)-[histone H3] + 2 2-oxoglutarate + 2 O2 = L-lysyl(9)-[histone H3] + 2 formaldehyde + 2 succinate + 2 CO2. In terms of biological role, histone demethylase that specifically demethylates 'Lys-9' of histone H3, thereby playing a central role in histone code. Preferentially demethylates mono- and dimethylated H3 'Lys-9' residue, with a preference for dimethylated residue, while it has weak or no activity on trimethylated H3 'Lys-9'. Demethylation of Lys residue generates formaldehyde and succinate. The protein is Lysine-specific demethylase 3A-B (kdm3a-b) of Xenopus laevis (African clawed frog).